Consider the following 197-residue polypeptide: Xanthine phosphoribosyltransferase (197 aa).

The xanthine site is built by L20 and N27. Residue 128–132 participates in 5-phospho-alpha-D-ribose 1-diphosphate binding; the sequence is ANGQA. K156 serves as a coordination point for xanthine.

The protein belongs to the purine/pyrimidine phosphoribosyltransferase family. Xpt subfamily. In terms of assembly, homodimer.

Its subcellular location is the cytoplasm. The enzyme catalyses XMP + diphosphate = xanthine + 5-phospho-alpha-D-ribose 1-diphosphate. Its pathway is purine metabolism; XMP biosynthesis via salvage pathway; XMP from xanthine: step 1/1. Functionally, converts the preformed base xanthine, a product of nucleic acid breakdown, to xanthosine 5'-monophosphate (XMP), so it can be reused for RNA or DNA synthesis. In Bacillus cereus (strain ATCC 14579 / DSM 31 / CCUG 7414 / JCM 2152 / NBRC 15305 / NCIMB 9373 / NCTC 2599 / NRRL B-3711), this protein is Xanthine phosphoribosyltransferase.